A 261-amino-acid chain; its full sequence is Putative methyltransferase MJ0046 (261 aa).

The protein belongs to the methyltransferase superfamily.

The polypeptide is Putative methyltransferase MJ0046 (Methanocaldococcus jannaschii (strain ATCC 43067 / DSM 2661 / JAL-1 / JCM 10045 / NBRC 100440) (Methanococcus jannaschii)).